Consider the following 360-residue polypeptide: Phosphate acyltransferase (360 aa).

Residues 296–305 (STLRREHLDR) are compositionally biased toward basic and acidic residues. The segment at 296–360 (STLRREHLDR…LRTAEPPGSL (65 aa)) is disordered. The segment covering 314 to 333 (PRQRRRPRRQKRRAACRPRP) has biased composition (basic residues). Over residues 334–350 (RSAAGRAPGSGVRGAAG) the composition is skewed to low complexity.

Belongs to the PlsX family. Homodimer. Probably interacts with PlsY.

The protein resides in the cytoplasm. The enzyme catalyses a fatty acyl-[ACP] + phosphate = an acyl phosphate + holo-[ACP]. It participates in lipid metabolism; phospholipid metabolism. Functionally, catalyzes the reversible formation of acyl-phosphate (acyl-PO(4)) from acyl-[acyl-carrier-protein] (acyl-ACP). This enzyme utilizes acyl-ACP as fatty acyl donor, but not acyl-CoA. The protein is Phosphate acyltransferase of Deinococcus radiodurans (strain ATCC 13939 / DSM 20539 / JCM 16871 / CCUG 27074 / LMG 4051 / NBRC 15346 / NCIMB 9279 / VKM B-1422 / R1).